Here is a 202-residue protein sequence, read N- to C-terminus: Venom allergen 5.02 (202 aa).

Cystine bridges form between C4–C16, C8–C101, C26–C94, and C168–C185. Residues 46-187 (KQHNEFRQKV…WHRHYLVCNY (142 aa)) enclose the SCP domain.

This sequence belongs to the CRISP family. Venom allergen 5-like subfamily. As to expression, expressed by the venom gland.

The protein localises to the secreted. In Vespa crabro (European hornet), this protein is Venom allergen 5.02.